The chain runs to 300 residues: 33 kDa chaperonin (300 aa).

2 disulfides stabilise this stretch: cysteine 247–cysteine 249 and cysteine 280–cysteine 283.

This sequence belongs to the HSP33 family. In terms of processing, under oxidizing conditions two disulfide bonds are formed involving the reactive cysteines. Under reducing conditions zinc is bound to the reactive cysteines and the protein is inactive.

The protein localises to the cytoplasm. Its function is as follows. Redox regulated molecular chaperone. Protects both thermally unfolding and oxidatively damaged proteins from irreversible aggregation. Plays an important role in the bacterial defense system toward oxidative stress. The protein is 33 kDa chaperonin of Prochlorococcus marinus (strain MIT 9312).